Consider the following 382-residue polypeptide: MALQGISVVELSGLAPGPFCAMVLADFGARVVRVDRPGSRYDVSRLGRGKRSLVLDLKQPRGAAVLRRLCKRSDVLLEPFRRGVMEKLQLGPEILQRENPRLIYARLSGFGQSGSFCRLAGHDINYLALSGVLSKIGRSGENPYAPLNLLADFAGGGLMCALGIIMALFDRTRTGKGQVIDANMVEGTAYLSSFLWKTQKLSLWEAPRGQNMLDGGAPFYTTYRTADGEFMAVGAIEPQFYELLIKGLGLKSDELPNQMSMDDWPEMKKKFADVFAEKTKAEWCQIFDGTDACVTPVLTFEEVVHHDHNKERGSFITSEEQDVSPRPAPLLLNTPAIPSFKRDPFIGEHTEEILEEFGFSREEIYQLNSDKIIESNKVKASL.

Residues Arg-36 and 55–58 (LDLK) contribute to the substrate site. Lys-58 is modified (N6-acetyllysine). Residue Lys-87 is modified to N6-acetyllysine; alternate. Position 87 is an N6-succinyllysine; alternate (Lys-87). Position 121-126 (121-126 (GHDINY)) interacts with substrate. His-122 (proton acceptor) is an active-site residue. Asp-152 acts as the Proton donor in catalysis. At Lys-268 the chain carries N6-succinyllysine. The Microbody targeting signal signature appears at 380–382 (ASL).

It belongs to the CoA-transferase III family. In terms of assembly, monomer.

The protein localises to the peroxisome. Its subcellular location is the mitochondrion. The catalysed reaction is a (2S)-2-methylacyl-CoA = a (2R)-2-methylacyl-CoA. It catalyses the reaction (25R)-3alpha,7alpha,12alpha-trihydroxy-5beta-cholestan-26-oyl-CoA = (25S)-3alpha,7alpha,12alpha-trihydroxy-5beta-cholestan-26-oyl-CoA. It carries out the reaction (2R,6)-dimethylheptanoyl-CoA = (2S,6)-dimethylheptanoyl-CoA. The protein operates within lipid metabolism; bile acid biosynthesis. It functions in the pathway lipid metabolism; fatty acid metabolism. In terms of biological role, catalyzes the interconversion of (R)- and (S)-stereoisomers of alpha-methyl-branched-chain fatty acyl-CoA esters. Acts only on coenzyme A thioesters, not on free fatty acids, and accepts as substrates a wide range of alpha-methylacyl-CoAs, including pristanoyl-CoA, trihydroxycoprostanoyl-CoA (an intermediate in bile acid synthesis), and arylpropionic acids like the anti-inflammatory drug ibuprofen (2-(4-isobutylphenyl)propionic acid) but neither 3-methyl-branched nor linear-chain acyl-CoAs. This is Alpha-methylacyl-CoA racemase (AMACR) from Homo sapiens (Human).